An 88-amino-acid chain; its full sequence is Putative membrane protein insertion efficiency factor (88 aa).

This sequence belongs to the UPF0161 family.

The protein localises to the cell membrane. Functionally, could be involved in insertion of integral membrane proteins into the membrane. This Exiguobacterium sibiricum (strain DSM 17290 / CCUG 55495 / CIP 109462 / JCM 13490 / 255-15) protein is Putative membrane protein insertion efficiency factor.